Consider the following 807-residue polypeptide: AP-5 complex subunit zeta-1 (807 aa).

Probably part of the adaptor protein complex 5 (AP-5) a tetramer composed of AP5B1, AP5M1, AP5S1 and AP5Z1. Interacts with ZFYVE26 and SPG11.

Its subcellular location is the cytoplasm. The protein resides in the nucleus. Its function is as follows. As part of AP-5, a probable fifth adaptor protein complex it may be involved in endosomal transport. The sequence is that of AP-5 complex subunit zeta-1 (Ap5z1) from Mus musculus (Mouse).